The chain runs to 131 residues: MSGGKGKAGSSEKASTSRSAKAGLTFPVGRVHRLLRKGNYAQRVGSGAPVYLTSVLEYLAAEILELAGNAARDNKKSRIIPRHLQLAIRNDEELNKLLGHVTIAQGGVLPNIHQSLLPAKKAKPGKASQEL.

The disordered stretch occupies residues 1–22; it reads MSGGKGKAGSSEKASTSRSAKA. Ser2 carries the post-translational modification N-acetylserine. Residues Lys5 and Lys7 each carry the N6-acetyllysine modification. N5-methylglutamine is present on Gln105. Residue Lys126 forms a Glycyl lysine isopeptide (Lys-Gly) (interchain with G-Cter in SUMO) linkage. Residue Ser128 is modified to Phosphoserine. Positions 128-129 match the [ST]-Q motif motif; sequence SQ.

Belongs to the histone H2A family. As to quaternary structure, the nucleosome is a histone octamer containing two molecules each of H2A, H2B, H3 and H4 assembled in one H3-H4 heterotetramer and two H2A-H2B heterodimers. The octamer wraps approximately 147 bp of DNA. Phosphorylated to form H2AS128ph (gamma-H2A) in response to DNA double-strand breaks (DSBs) generated by exogenous genotoxic agents and by stalled replication forks. Phosphorylation is dependent on the DNA damage checkpoint kinases MEC1/ATR and TEL1/ATM, spreads on either side of a detected DSB site and may mark the surrounding chromatin for recruitment of proteins required for DNA damage signaling and repair. Gamma-H2A is removed from the DNA prior to the strand invasion-primer extension step of the repair process and subsequently dephosphorylated. Dephosphorylation is necessary for efficient recovery from the DNA damage checkpoint. Post-translationally, acetylated by ESA1 to form H2AK4ac and H2AK7ac.

It is found in the nucleus. Its subcellular location is the chromosome. In terms of biological role, core component of nucleosome which plays a central role in DNA double strand break (DSB) repair. Nucleosomes wrap and compact DNA into chromatin, limiting DNA accessibility to the cellular machineries which require DNA as a template. Histones thereby play a central role in transcription regulation, DNA repair, DNA replication and chromosomal stability. DNA accessibility is regulated via a complex set of post-translational modifications of histones, also called histone code, and nucleosome remodeling. This Scheffersomyces stipitis (strain ATCC 58785 / CBS 6054 / NBRC 10063 / NRRL Y-11545) (Yeast) protein is Histone H2A.2 (HTA2).